Here is a 383-residue protein sequence, read N- to C-terminus: Decapping nuclease RAI1 (383 aa).

E166 provides a ligand contact to a divalent metal cation. E215 is a substrate binding site. 3 residues coordinate a divalent metal cation: D217, E235, and L236. 2 residues coordinate substrate: K237 and Q261.

The protein belongs to the DXO/Dom3Z family. In terms of assembly, interacts with RAT1; the interaction is direct, stabilizes RAT1 protein structure and stimulates its exoribonuclease activity. The interaction also stimulates RAI1 pyrophosphohydrolase activity, probably by recruiting it to mRNA substrates. It depends on a divalent metal cation as a cofactor.

Its subcellular location is the nucleus. The enzyme catalyses a 5'-end NAD(+)-phospho-ribonucleoside in mRNA + H2O = a 5'-end phospho-ribonucleoside in mRNA + NAD(+) + H(+). It catalyses the reaction a 5'-end (N(7)-methyl 5'-triphosphoguanosine)-ribonucleoside-ribonucleotide in mRNA + H2O = a (N(7)-methyl 5'-triphosphoguanosine)-nucleoside + a 5'-end phospho-ribonucleoside in mRNA + H(+). The catalysed reaction is a 5'-end triphospho-ribonucleoside in mRNA + H2O = a 5'-end phospho-ribonucleoside in mRNA + diphosphate + H(+). Decapping enzyme for NAD-capped RNAs: specifically hydrolyzes the nicotinamide adenine dinucleotide (NAD) cap from a subset of RNAs by removing the entire NAD moiety from the 5'-end of an NAD-capped RNA. The NAD-cap is present at the 5'-end of some RNAs and snoRNAs. In contrast to the canonical 5'-end N7 methylguanosine (m7G) cap, the NAD cap promotes mRNA decay. Also acts as a non-canonical decapping enzyme that removes the entire cap structure of m7G capped or incompletely capped RNAs. Has decapping activity toward incomplete 5'-end m7G cap mRNAs such as unmethylated 5'-end-capped RNA (cap0), while it has no activity toward 2'-O-ribose methylated m7G cap (cap1). Also possesses RNA 5'-pyrophosphohydrolase activity by hydrolyzing the 5'-end triphosphate to release pyrophosphates. Stimulates exoribonuclease activity of Rat1, allowing it to degrade RNAs with stable secondary structure more effectively. The chain is Decapping nuclease RAI1 from Lachancea thermotolerans (strain ATCC 56472 / CBS 6340 / NRRL Y-8284) (Yeast).